The sequence spans 426 residues: Gamma-glutamyl phosphate reductase (426 aa).

Belongs to the gamma-glutamyl phosphate reductase family.

Its subcellular location is the cytoplasm. The enzyme catalyses L-glutamate 5-semialdehyde + phosphate + NADP(+) = L-glutamyl 5-phosphate + NADPH + H(+). It functions in the pathway amino-acid biosynthesis; L-proline biosynthesis; L-glutamate 5-semialdehyde from L-glutamate: step 2/2. In terms of biological role, catalyzes the NADPH-dependent reduction of L-glutamate 5-phosphate into L-glutamate 5-semialdehyde and phosphate. The product spontaneously undergoes cyclization to form 1-pyrroline-5-carboxylate. This chain is Gamma-glutamyl phosphate reductase, found in Cupriavidus taiwanensis (strain DSM 17343 / BCRC 17206 / CCUG 44338 / CIP 107171 / LMG 19424 / R1) (Ralstonia taiwanensis (strain LMG 19424)).